Here is a 129-residue protein sequence, read N- to C-terminus: Small ribosomal subunit protein uS11 (129 aa).

Positions glutamate 108–valine 129 are disordered.

This sequence belongs to the universal ribosomal protein uS11 family. Part of the 30S ribosomal subunit.

Functionally, located on the platform of the 30S subunit. The polypeptide is Small ribosomal subunit protein uS11 (Methanothrix thermoacetophila (strain DSM 6194 / JCM 14653 / NBRC 101360 / PT) (Methanosaeta thermophila)).